The primary structure comprises 224 residues: ATP-dependent dethiobiotin synthetase BioD (224 aa).

14–19 (GIGKTV) provides a ligand contact to ATP. Threonine 18 is a Mg(2+) binding site. Lysine 39 is a catalytic residue. A substrate-binding site is contributed by serine 43. Residues aspartate 56, 117-120 (EGVG), and 177-178 (NE) contribute to the ATP site. The Mg(2+) site is built by aspartate 56 and glutamate 117.

Belongs to the dethiobiotin synthetase family. As to quaternary structure, homodimer. It depends on Mg(2+) as a cofactor.

It localises to the cytoplasm. The enzyme catalyses (7R,8S)-7,8-diammoniononanoate + CO2 + ATP = (4R,5S)-dethiobiotin + ADP + phosphate + 3 H(+). Its pathway is cofactor biosynthesis; biotin biosynthesis; biotin from 7,8-diaminononanoate: step 1/2. Catalyzes a mechanistically unusual reaction, the ATP-dependent insertion of CO2 between the N7 and N8 nitrogen atoms of 7,8-diaminopelargonic acid (DAPA, also called 7,8-diammoniononanoate) to form a ureido ring. This Xanthomonas campestris pv. campestris (strain B100) protein is ATP-dependent dethiobiotin synthetase BioD.